The sequence spans 1403 residues: Baculoviral IAP repeat-containing protein 1f (1403 aa).

BIR repeat units follow at residues 60 to 127 (EAKR…CEFL), 159 to 227 (EEAR…CEFL), and 278 to 345 (EELR…CVFL). Cysteine 315, cysteine 318, histidine 335, and cysteine 342 together coordinate Zn(2+). The region spanning 464–759 (SVMCVEGEAG…EFLAAVRLTE (296 aa)) is the NACHT domain. 473–478 (GSGKTT) contributes to the ATP binding site.

In terms of assembly, component of the NLRC4 inflammasome, at least composed of NLRC4, caspase-1 (CASP1) and some NAIP protein. As to quaternary structure, (Microbial infection) Interacts with S.typhimurium (Salmonella) flagellin.

In terms of biological role, sensor component of the NLRC4 inflammasome that specifically recognizes and binds flagellin from pathogenic bacteria. Association of pathogenic bacteria proteins drives in turn drive assembly and activation of the NLRC4 inflammasome, promoting caspase-1 activation, cytokine production and macrophage pyroptosis. The NLRC4 inflammasome is activated as part of the innate immune response to a range of intracellular bacteria. The NLRC4 inflammasome senses Gram-negative bacteria such as L.pneumophila and P.aeruginosa, enteric pathogens S.typhimurium (Salmonella) and S.flexneri. May contribute to prevent motor-neuron apoptosis induced by a variety of signals. The polypeptide is Baculoviral IAP repeat-containing protein 1f (Naip6) (Mus musculus (Mouse)).